Here is a 215-residue protein sequence, read N- to C-terminus: Beta-crystallin A3-1 (215 aa).

The interval 1 to 30 is N-terminal arm; the sequence is MEIPVDQTEREDITSEKMAQINPLPVHLGP. Beta/gamma crystallin 'Greek key' domains lie at 31–70 and 71–117; these read WKIT…KVEC and GAWI…RPIC. The tract at residues 118 to 123 is connecting peptide; that stretch reads SANHIE. 2 Beta/gamma crystallin 'Greek key' domains span residues 124-165 and 166-214; these read SKLV…KVQC and GAWV…RRIQ.

The protein belongs to the beta/gamma-crystallin family. In terms of assembly, homo/heterodimer, or complexes of higher-order. The structure of beta-crystallin oligomers seems to be stabilized through interactions between the N-terminal arms. The N-terminus is blocked.

Its function is as follows. Crystallins are the dominant structural components of the vertebrate eye lens. This is Beta-crystallin A3-1 from Aquarana catesbeiana (American bullfrog).